The following is a 121-amino-acid chain: Small ribosomal subunit protein uS12 (121 aa).

The segment at 1-25 (MPTINQLVRKNRKQKKSQSKSPVLE) is disordered. Positions 9–18 (RKNRKQKKSQ) are enriched in basic residues. Asp-89 carries the post-translational modification 3-methylthioaspartic acid.

Belongs to the universal ribosomal protein uS12 family. In terms of assembly, part of the 30S ribosomal subunit. Contacts proteins S8 and S17. May interact with IF1 in the 30S initiation complex.

With S4 and S5 plays an important role in translational accuracy. Its function is as follows. Interacts with and stabilizes bases of the 16S rRNA that are involved in tRNA selection in the A site and with the mRNA backbone. Located at the interface of the 30S and 50S subunits, it traverses the body of the 30S subunit contacting proteins on the other side and probably holding the rRNA structure together. The combined cluster of proteins S8, S12 and S17 appears to hold together the shoulder and platform of the 30S subunit. The chain is Small ribosomal subunit protein uS12 from Rhodopirellula baltica (strain DSM 10527 / NCIMB 13988 / SH1).